We begin with the raw amino-acid sequence, 523 residues long: Metalloprotease TIKI2 (523 aa).

Positions 1 to 26 are cleaved as a signal peptide; that stretch reads MGKTMWARAVFLCFSVGTLLWQEVLT. At 27 to 499 the chain is on the extracellular side; the sequence is RRIPVDTGQC…HSQSNSSPKC (473 aa). Residues Asn-225, Asn-234, Asn-283, and Asn-341 are each glycosylated (N-linked (GlcNAc...) asparagine). A helical transmembrane segment spans residues 500–516; it reads LSASPAFLYTLVTLCLI. Over 517–523 the chain is Cytoplasmic; sequence TTMRTRS.

It belongs to the TIKI family. Mn(2+) serves as cofactor. Co(2+) is required as a cofactor.

The protein resides in the cell membrane. Metalloprotease that acts as a negative regulator of the Wnt signaling pathway by mediating the cleavage of the N-terminal residues of a subset of Wnt proteins. Following cleavage, Wnt proteins become oxidized and form large disulfide-bond oligomers, leading to their inactivation. Able to cleave wnt8. Required for head formation. This is Metalloprotease TIKI2 (trabd2b) from Xenopus tropicalis (Western clawed frog).